Here is a 324-residue protein sequence, read N- to C-terminus: tRNA-modifying protein YgfZ (324 aa).

Trp-184 lines the folate pocket.

The protein belongs to the tRNA-modifying YgfZ family.

The protein resides in the cytoplasm. In terms of biological role, folate-binding protein involved in regulating the level of ATP-DnaA and in the modification of some tRNAs. It is probably a key factor in regulatory networks that act via tRNA modification, such as initiation of chromosomal replication. The sequence is that of tRNA-modifying protein YgfZ from Vibrio vulnificus (strain YJ016).